Consider the following 1112-residue polypeptide: Cytosolic carboxypeptidase 4 (1112 aa).

The segment at 291–345 (TTEPPHDLPEEDFEDDGDDEVDKDSDTEDGKVEDDDLETDVNKLSSKPGLDRPEE) is disordered. Over residues 299 to 329 (PEEDFEDDGDDEVDKDSDTEDGKVEDDDLET) the composition is skewed to acidic residues. The 291-residue stretch at 732-1022 (YPYTYTALMT…HPVDGLQGLQ (291 aa)) folds into the Peptidase M14 domain. Positions 804, 807, and 901 each coordinate Zn(2+). Catalysis depends on E986, which acts as the Proton donor/acceptor.

It belongs to the peptidase M14 family. In terms of assembly, interacts with MYLK. Interacts with TCF4. Zn(2+) serves as cofactor. In terms of tissue distribution, expressed in corneal endothelium.

It is found in the cytoplasm. The protein resides in the cytosol. The catalysed reaction is (L-glutamyl)(n+1)-gamma-L-glutamyl-L-glutamyl-[protein] + H2O = (L-glutamyl)(n)-gamma-L-glutamyl-L-glutamyl-[protein] + L-glutamate. It catalyses the reaction C-terminal L-alpha-aminoacyl-L-glutamyl-L-glutamyl-[tubulin] + H2O = C-terminal L-alpha-aminoacyl-L-glutamyl-[tubulin] + L-glutamate. Its function is as follows. Metallocarboxypeptidase that mediates deglutamylation of tubulin and non-tubulin target proteins. Catalyzes the removal of polyglutamate side chains present on the gamma-carboxyl group of glutamate residues within the C-terminal tail of tubulin protein. Specifically cleaves tubulin long-side-chains, while it is not able to remove the branching point glutamate. Also catalyzes the removal of polyglutamate residues from the carboxy-terminus of non-tubulin proteins such as MYLK. This is Cytosolic carboxypeptidase 4 from Homo sapiens (Human).